A 157-amino-acid chain; its full sequence is Monooxygenase CPUR_05417 (157 aa).

It belongs to the avfA family.

It functions in the pathway secondary metabolite biosynthesis. In terms of biological role, monooxygenase; part of the ergochrome gene cluster responsible for the typical purple-black color of the ergot sclerotia. The ergochrome gene cluster produces several ergot pigments including the yellow ergochrome secalonic acid and its derivatives, as well as the red anthraquinones endocrocin and clavorubin. The pathway begins with the synthesis of atrochrysone thioester by the polyketide synthase (PKS) CPUR_05437. The atrochrysone carboxyl ACP thioesterase CPUR_05436 then breaks the thioester bond and releases the atrochrysone carboxylic acid from CPUR_05437. The atrochrysone carboxylic acid is then converted to atrochrysone which is further transformed into emodin anthrone. The next step is performed by the anthrone oxygenase CPUR_05434 that catalyzes the oxidation of emodinanthrone to emodin. Emodin is further modified to yield monodictyphenone via several steps involving CPUR_05427, CPUR_05428, CPUR_05429 and CPUR_05430. The short chain dehydrogenase/reductase CPUR_05418 then catalyzes the C-5 ketoreduction to give the xanthone skeleton of the monomeric units. Ergochromes formation requires further dimerization steps of different xanthone units, probably catalyzed by the cytochrome P450 monooxygenase CPUR_05419. CPUR_05425, CPUR_05426 and CPUR_05431 are unique to Claviceps, thus it is likely that they are involved in further modification of xanthone units or in their dimerization. The yellow ergochromes and the red anthraquinone pigments endocrocin and clavorubin are products from the same PKS derived precursors and the latter are likely shunt products in the pathway of xanthone biosynthesis. It is proposed that atrochrysone carboxylic acid released from the PKS CPUR_05437 can also be converted to endocrocin anthrone which is further oxidized into endocrocin by CPUR_05435. Endocrocin could be then modified to clavorubin, possibly by CPUR_05423 and CPUR_05431. Clavorubin is the principal anthraquinone metabolite produced by the cluster with a much higher yield compared to endocrocin. The polypeptide is Monooxygenase CPUR_05417 (Claviceps purpurea (strain 20.1) (Ergot fungus)).